We begin with the raw amino-acid sequence, 351 residues long: uncharacterized protein (351 aa).

This is an uncharacterized protein from Gallus gallus (Chicken).